Here is a 417-residue protein sequence, read N- to C-terminus: Serine hydroxymethyltransferase (417 aa).

Residues leucine 121 and 125–127 (GHL) each bind (6S)-5,6,7,8-tetrahydrofolate. Lysine 229 bears the N6-(pyridoxal phosphate)lysine mark. 355–357 (SPF) contacts (6S)-5,6,7,8-tetrahydrofolate.

It belongs to the SHMT family. In terms of assembly, homodimer. Requires pyridoxal 5'-phosphate as cofactor.

Its subcellular location is the cytoplasm. The enzyme catalyses (6R)-5,10-methylene-5,6,7,8-tetrahydrofolate + glycine + H2O = (6S)-5,6,7,8-tetrahydrofolate + L-serine. It functions in the pathway one-carbon metabolism; tetrahydrofolate interconversion. It participates in amino-acid biosynthesis; glycine biosynthesis; glycine from L-serine: step 1/1. In terms of biological role, catalyzes the reversible interconversion of serine and glycine with tetrahydrofolate (THF) serving as the one-carbon carrier. This reaction serves as the major source of one-carbon groups required for the biosynthesis of purines, thymidylate, methionine, and other important biomolecules. Also exhibits THF-independent aldolase activity toward beta-hydroxyamino acids, producing glycine and aldehydes, via a retro-aldol mechanism. This Shewanella sp. (strain ANA-3) protein is Serine hydroxymethyltransferase.